Here is a 445-residue protein sequence, read N- to C-terminus: Glycine--tRNA ligase (445 aa).

Substrate contacts are provided by Lys-97 and Glu-145. Residues 177–179, 187–192, 262–263, and 308–311 contribute to the ATP site; these read RNE, FRTCEF, EI, and GLTR. A substrate-binding site is contributed by 192 to 196; that stretch reads FEQME. 304–308 is a substrate binding site; that stretch reads ETSLG.

This sequence belongs to the class-II aminoacyl-tRNA synthetase family. Homodimer.

The protein localises to the cytoplasm. The enzyme catalyses tRNA(Gly) + glycine + ATP = glycyl-tRNA(Gly) + AMP + diphosphate. Its function is as follows. Catalyzes the attachment of glycine to tRNA(Gly). In Borrelia hermsii (strain HS1 / DAH), this protein is Glycine--tRNA ligase.